A 428-amino-acid chain; its full sequence is Trigger factor (428 aa).

One can recognise a PPIase FKBP-type domain in the interval 166–250 (GDIVTFDFKG…IKNIKEKILP (85 aa)).

It belongs to the FKBP-type PPIase family. Tig subfamily.

Its subcellular location is the cytoplasm. The catalysed reaction is [protein]-peptidylproline (omega=180) = [protein]-peptidylproline (omega=0). In terms of biological role, involved in protein export. Acts as a chaperone by maintaining the newly synthesized protein in an open conformation. Functions as a peptidyl-prolyl cis-trans isomerase. The protein is Trigger factor of Mycoplasma mycoides subsp. mycoides SC (strain CCUG 32753 / NCTC 10114 / PG1).